A 110-amino-acid chain; its full sequence is Carboxysome shell protein CsoS1B (110 aa).

Residues 8–93 (ALGMIETRGL…VHSEVEIILP (86 aa)) form the BMC domain.

This sequence belongs to the bacterial microcompartments protein family. CsoS1 subfamily. In terms of assembly, homohexamer with a small central pore. Interacts with the N-terminus (residues 1-136) of RuBisCO (CbbL).

It localises to the carboxysome. One of shell proteins of the carboxysome, a polyhedral inclusion where RuBisCO (ribulose bisphosphate carboxylase, ccbL-ccbS) is sequestered. Assembles into hexamers which make sheets that form the facets of the polyhedral carboxysome. The shell probably limits the diffusion of CO(2) into and out of the carboxysome. There are estimated to be 540 CsoS1B proteins per carboxysome. Functionally, unlike beta-carboxysomes, alpha-carboxysomes (Cb) can form without cargo protein. CsoS2 is essential for Cb formation and is also capable of targeting foreign proteins to the Cb. The Cb shell assembles with the aid of CsoS2; CsoS1A, CsoS1B and CsoS1C form the majority of the shell while CsoS4A and CsoS4B form vertices. CsoS1D forms pseudohexamers that probably control metabolite flux into and out of the shell. The polypeptide is Carboxysome shell protein CsoS1B (Halothiobacillus neapolitanus (strain ATCC 23641 / c2) (Thiobacillus neapolitanus)).